The chain runs to 667 residues: Endogenous retrovirus group K member 5 Gag polyprotein (667 aa).

G2 carries N-myristoyl glycine lipidation. Residues K166–Q188 form a disordered region. CCHC-type zinc fingers lie at residues K543–V560 and G580–S597. Positions K598–Q667 are disordered. Residues G648–Q667 are compositionally biased toward polar residues.

This sequence belongs to the beta type-B retroviral Gag protein family. HERV class-II K(HML-2) gag subfamily. Myristoylation is essential for retroviral assembly. Alteration of the glycine residue leads to a block in the budding of particles and an accumulation of Gag inside the cell. In terms of processing, specific enzymatic cleavages may yield mature proteins.

It localises to the cell membrane. The products of the Gag polyproteins of infectious retroviruses perform highly complex orchestrated tasks during the assembly, budding, maturation, and infection stages of the viral replication cycle. During viral assembly, the proteins form membrane associations and self-associations that ultimately result in budding of an immature virion from the infected cell. Gag precursors also function during viral assembly to selectively bind and package two plus strands of genomic RNA. Endogenous Gag proteins may have kept, lost or modified their original function during evolution. The sequence is that of Endogenous retrovirus group K member 5 Gag polyprotein (ERVK-5) from Homo sapiens (Human).